A 206-amino-acid polypeptide reads, in one-letter code: Triafestin-2 (206 aa).

Residues 1–18 (MKTILAVIFFGILAFAFA) form the signal peptide. N-linked (GlcNAc...) asparagine glycosylation is found at N25, N55, and N178.

It belongs to the calycin superfamily. Triabin family. As to quaternary structure, interacts with host coagulation factor XII (F12) (inactive and activated) (via amino acids 1-77). Interacts with host high molecular weight kininogen (KNG1) (via amino acids 402-532). In terms of tissue distribution, salivary gland (at protein level).

Its subcellular location is the secreted. Its activity is regulated as follows. Zn(2+) modulates binding to host coagulation factor XII (F12) and high molecular weight kininogen (KNG1). Suppresses activation of the host plasma kallikrein-kinin system, leading to inhibition of the intrinsic coagulation pathway. Blocks host coagulation factor XII (F12) and prekallikrein (KLKB1) reciprocal activation without affecting their amidolytic activities. Blocks binding of host F12 and high molecular weight kininogen (KNG1) to negatively charged surfaces. Attenuates generation of bradykinin by interfering with activation of host kallikrein-kinin system. This is Triafestin-2 from Triatoma infestans (Assassin bug).